Here is a 122-residue protein sequence, read N- to C-terminus: Small ribosomal subunit protein uS13 (122 aa).

Positions 93–122 are disordered; sequence RLSLPVRGQRTKTNSRTRKGKRKTVAGKKK. The segment covering 101–122 has biased composition (basic residues); the sequence is QRTKTNSRTRKGKRKTVAGKKK.

Belongs to the universal ribosomal protein uS13 family. As to quaternary structure, part of the 30S ribosomal subunit. Forms a loose heterodimer with protein S19. Forms two bridges to the 50S subunit in the 70S ribosome.

In terms of biological role, located at the top of the head of the 30S subunit, it contacts several helices of the 16S rRNA. In the 70S ribosome it contacts the 23S rRNA (bridge B1a) and protein L5 of the 50S subunit (bridge B1b), connecting the 2 subunits; these bridges are implicated in subunit movement. Contacts the tRNAs in the A and P-sites. The polypeptide is Small ribosomal subunit protein uS13 (Chlamydia caviae (strain ATCC VR-813 / DSM 19441 / 03DC25 / GPIC) (Chlamydophila caviae)).